Reading from the N-terminus, the 254-residue chain is Imidazole glycerol phosphate synthase subunit HisF (254 aa).

Residues Asp11 and Asp130 contribute to the active site.

This sequence belongs to the HisA/HisF family. In terms of assembly, heterodimer of HisH and HisF.

The protein resides in the cytoplasm. It catalyses the reaction 5-[(5-phospho-1-deoxy-D-ribulos-1-ylimino)methylamino]-1-(5-phospho-beta-D-ribosyl)imidazole-4-carboxamide + L-glutamine = D-erythro-1-(imidazol-4-yl)glycerol 3-phosphate + 5-amino-1-(5-phospho-beta-D-ribosyl)imidazole-4-carboxamide + L-glutamate + H(+). The protein operates within amino-acid biosynthesis; L-histidine biosynthesis; L-histidine from 5-phospho-alpha-D-ribose 1-diphosphate: step 5/9. Functionally, IGPS catalyzes the conversion of PRFAR and glutamine to IGP, AICAR and glutamate. The HisF subunit catalyzes the cyclization activity that produces IGP and AICAR from PRFAR using the ammonia provided by the HisH subunit. This Acidiphilium cryptum (strain JF-5) protein is Imidazole glycerol phosphate synthase subunit HisF.